The primary structure comprises 263 residues: Acyl-[acyl-carrier-protein]--UDP-N-acetylglucosamine O-acyltransferase (263 aa).

This sequence belongs to the transferase hexapeptide repeat family. LpxA subfamily. As to quaternary structure, homotrimer.

It localises to the cytoplasm. The catalysed reaction is a (3R)-hydroxyacyl-[ACP] + UDP-N-acetyl-alpha-D-glucosamine = a UDP-3-O-[(3R)-3-hydroxyacyl]-N-acetyl-alpha-D-glucosamine + holo-[ACP]. Its pathway is glycolipid biosynthesis; lipid IV(A) biosynthesis; lipid IV(A) from (3R)-3-hydroxytetradecanoyl-[acyl-carrier-protein] and UDP-N-acetyl-alpha-D-glucosamine: step 1/6. Its function is as follows. Involved in the biosynthesis of lipid A, a phosphorylated glycolipid that anchors the lipopolysaccharide to the outer membrane of the cell. The protein is Acyl-[acyl-carrier-protein]--UDP-N-acetylglucosamine O-acyltransferase of Campylobacter lari (strain RM2100 / D67 / ATCC BAA-1060).